The following is a 71-amino-acid chain: Cytochrome c oxidase subunit 7, mitochondrial (71 aa).

Residues Met1–Ser35 are Mitochondrial matrix-facing. A helical membrane pass occupies residues Gly36 to Ser58. Residues Arg59–Asp71 lie on the Mitochondrial intermembrane side of the membrane.

Belongs to the cytochrome c oxidase VIIa family. Component of the cytochrome c oxidase (complex IV, CIV), a multisubunit enzyme composed of 11 subunits. The complex is composed of a catalytic core of 3 subunits Cox1, Cox2 and Cox3, encoded in the mitochondrial DNA, and 8 supernumerary subunits Cox4, Cox5a/Cox5, Cox6, Cox7, Cox8, Cox7a/Cox9, Cox6b/Cox12 and Cox6a/Cox13, which are encoded in the nuclear genome. The complex exists as a monomer or a dimer and forms respiratory supercomplexes (SCs) in the inner mitochondrial membrane with NADH-ubiquinone oxidoreductase (complex I, CI) and ubiquinol-cytochrome c oxidoreductase (cytochrome b-c1 complex, complex III, CIII), resulting in various different assemblies (supercomplexes I(1)IV(1), I(1)III(3)IV(2), III(2)IV(1) and III(2)IV(2) as well as larger supercomplexes of compositions like I(1)III(2)IV(5-6)).

It is found in the mitochondrion inner membrane. Its pathway is energy metabolism; oxidative phosphorylation. In terms of biological role, component of the cytochrome c oxidase, the last enzyme in the mitochondrial electron transport chain which drives oxidative phosphorylation. The respiratory chain contains 3 multisubunit complexes succinate dehydrogenase (complex II, CII), ubiquinol-cytochrome c oxidoreductase (cytochrome b-c1 complex, complex III, CIII) and cytochrome c oxidase (complex IV, CIV), that cooperate to transfer electrons derived from NADH and succinate to molecular oxygen, creating an electrochemical gradient over the inner membrane that drives transmembrane transport and the ATP synthase. Cytochrome c oxidase is the component of the respiratory chain that catalyzes the reduction of oxygen to water. Electrons originating from reduced cytochrome c in the intermembrane space (IMS) are transferred via the dinuclear copper A center (CU(A)) of Cox2 and heme A of Cox1 to the active site in Cox1, a binuclear center (BNC) formed by heme A3 and copper B (CU(B)). The BNC reduces molecular oxygen to 2 water molecules using 4 electrons from cytochrome c in the IMS and 4 protons from the mitochondrial matrix. The polypeptide is Cytochrome c oxidase subunit 7, mitochondrial (Neurospora crassa (strain ATCC 24698 / 74-OR23-1A / CBS 708.71 / DSM 1257 / FGSC 987)).